The chain runs to 258 residues: Bidirectional sugar transporter SWEET9 (258 aa).

Residues 1 to 7 lie on the Extracellular side of the membrane; that stretch reads MFLKVHE. The helical transmembrane segment at 8–28 threads the bilayer; sequence IAFLFGLLGNIVSFGVFLSPV. In terms of domain architecture, MtN3/slv 1 spans 10 to 96; it reads FLFGLLGNIV…FLYILYAPRE (87 aa). Residues 29-42 lie on the Cytoplasmic side of the membrane; that stretch reads PTFYGIYKKKSSKG. The helical transmembrane segment at 43 to 63 threads the bilayer; sequence FQSIPYICALASATLLLYYGI. The Extracellular segment spans residues 64–69; the sequence is MKTHAY. Residues 70-90 form a helical membrane-spanning segment; sequence LIISINTFGCFIEISYLFLYI. Residues 91–103 lie on the Cytoplasmic side of the membrane; sequence LYAPREAKISTLK. The chain crosses the membrane as a helical span at residues 104-124; sequence LIVICNIGGLGLLILLVNLLV. The Extracellular portion of the chain corresponds to 125–131; that stretch reads PKQHRVS. Residues 132-152 traverse the membrane as a helical segment; it reads TVGWVCAAYSLAVFASPLSVM. Positions 132-216 constitute a MtN3/slv 2 domain; the sequence is TVGWVCAAYS…ILYMMYQGST (85 aa). Residues 153–165 lie on the Cytoplasmic side of the membrane; sequence RKVIKTKSVEYMP. The helical transmembrane segment at 166-186 threads the bilayer; sequence FLLSLSLTLNAVMWFFYGLLI. The Extracellular portion of the chain corresponds to 187–189; sequence KDK. The helical transmembrane segment at 190-210 threads the bilayer; it reads FIAMPNILGFLFGVAQMILYM. Over 211-258 the chain is Cytoplasmic; sequence MYQGSTKTDLPTENQLANKTDVNEVPIVAVELPDVGSDNVEGSVRPMK.

Belongs to the SWEET sugar transporter family. Forms heterooligomers with SWEET1, SWEET5, SWEET8, SWEET11, SWEET13, SWEET16 and SWEET17. In terms of tissue distribution, specifically expressed in nectaries, mostly in the lower half of nectary parenchyma.

Its subcellular location is the cell membrane. The protein resides in the cytoplasmic vesicle membrane. It is found in the golgi apparatus. It localises to the trans-Golgi network membrane. Mediates both low-affinity uptake and efflux of sugar across the plasma membrane. Nectary-specific sugar transporter required for nectar production by mediating the secretion of sucrose from the nectary parenchyma to the extracellular space. The polypeptide is Bidirectional sugar transporter SWEET9 (Arabidopsis thaliana (Mouse-ear cress)).